The chain runs to 397 residues: Myb family transcription factor PHL4 (397 aa).

Positions 1–27 are disordered; the sequence is MIPNDDDDANSMKNYPLNDDDANSMKN. Residues 228 to 288 enclose the HTH myb-type domain; sequence AAAKGRMRWT…HLQKYRTAKY (61 aa). Residues 259–284 constitute a DNA-binding region (H-T-H motif); sequence PKGVLKHMKVEGLTIFHVKSHLQKYR. Residues 319–339 are coiled coil; sequence TETLRIQMEHQKKLHEQLESL. The short motif at 332–337 is the LHEQLE element; sequence LHEQLE. The tract at residues 359 to 397 is disordered; sequence KQNMGFGGPEQGEKTSAKTPENGSEESESPRPKRPRNEE. A compositionally biased stretch (basic and acidic residues) spans 386–397; that stretch reads ESPRPKRPRNEE. At serine 387 the chain carries Phosphoserine.

The protein belongs to the MYB-CC family.

It localises to the nucleus. In terms of biological role, transcription factor involved in male gametophyte development. The sequence is that of Myb family transcription factor PHL4 from Arabidopsis thaliana (Mouse-ear cress).